Consider the following 1191-residue polypeptide: Puratrophin-1 (1191 aa).

Disordered stretches follow at residues 1 to 152 (MERP…DPVG) and 707 to 728 (AGGG…SDPR). Ser64 is modified (phosphoserine). The span at 111–120 (SHLSLAQGES) shows a compositional bias: polar residues. The DH domain occupies 732 to 908 (RLQLVLAEMV…HFQLRHGNDL (177 aa)). In terms of domain architecture, PH spans 920 to 1027 (NLKEQGQLVR…WTADISHLLW (108 aa)). Positions 1150 to 1176 (SLTAEDSEISSQCPSASGSSGSDSSCV) are disordered. The segment covering 1159 to 1176 (SSQCPSASGSSGSDSSCV) has biased composition (low complexity).

As to expression, expressed in kidney, Leydig cells in the testis, epithelial cells in the prostate gland and Langerhans islet in the pancreas. Isoform 1 and isoform 3 are strongly expressed in Purkinje cells and to a lower extent in other neurons (at protein level). Widely expressed at low levels. More strongly expressed in testis and pancreas.

In terms of biological role, possible role in intracellular signaling and cytoskeleton dynamics at the Golgi. The protein is Puratrophin-1 (PLEKHG4) of Homo sapiens (Human).